The chain runs to 99 residues: uncharacterized protein (99 aa).

Residues 1–17 (MMMNAFFPAMALMVLVG) form the signal peptide. A lipid anchor (N-palmitoyl cysteine) is attached at Cys18. Cys18 carries S-diacylglycerol cysteine lipidation.

Its subcellular location is the cell membrane. This is an uncharacterized protein from Shigella boydii serotype 4 (strain Sb227).